The primary structure comprises 71 residues: UPF0346 protein BCE_2336 (71 aa).

The protein belongs to the UPF0346 family.

This is UPF0346 protein BCE_2336 from Bacillus cereus (strain ATCC 10987 / NRS 248).